The chain runs to 238 residues: Tetraspanin-4 (238 aa).

Topologically, residues 1 to 13 (MARACLQAVKYLM) are cytoplasmic. A helical membrane pass occupies residues 14–34 (FAFNLLFWLGGCGVLGVGIWL). The Extracellular segment spans residues 35-55 (AATQGSFATLSSSFPSLSAAN). The chain crosses the membrane as a helical span at residues 56-76 (LLIITGAFVMAIGFVGCLGAI). Residues 77-85 (KENKCLLLT) are Cytoplasmic-facing. The helical transmembrane segment at 86-106 (FFLLLLLVFLLEATIAILFFA) threads the bilayer. The Extracellular portion of the chain corresponds to 107 to 201 (YTDKIDRYAQ…ETVKVWLQEN (95 aa)). N-linked (GlcNAc...) asparagine glycans are attached at residues asparagine 152 and asparagine 161. Residues 202-222 (LLAVGIFGLCTALVQILGLTF) form a helical membrane-spanning segment. Over 223 to 238 (AMTMYCQVVKADTYCA) the chain is Cytoplasmic.

Belongs to the tetraspanin (TM4SF) family. As to quaternary structure, forms a complex with integrins.

It is found in the membrane. This chain is Tetraspanin-4 (TSPAN4), found in Pongo abelii (Sumatran orangutan).